The following is a 201-amino-acid chain: Proteasome subunit beta 1 (201 aa).

Met-1 is a propeptide (removed in mature form; by autocatalysis). Catalysis depends on Thr-2, which acts as the Nucleophile.

Belongs to the peptidase T1B family. In terms of assembly, the 20S proteasome core is composed of 14 alpha and 14 beta subunits that assemble into four stacked heptameric rings, resulting in a barrel-shaped structure. The two inner rings, each composed of seven catalytic beta subunits, are sandwiched by two outer rings, each composed of seven alpha subunits. The catalytic chamber with the active sites is on the inside of the barrel. Has a gated structure, the ends of the cylinder being occluded by the N-termini of the alpha-subunits. Is capped at one or both ends by the proteasome regulatory ATPase, PAN.

The protein localises to the cytoplasm. The catalysed reaction is Cleavage of peptide bonds with very broad specificity.. With respect to regulation, the formation of the proteasomal ATPase PAN-20S proteasome complex, via the docking of the C-termini of PAN into the intersubunit pockets in the alpha-rings, triggers opening of the gate for substrate entry. Interconversion between the open-gate and close-gate conformations leads to a dynamic regulation of the 20S proteasome proteolysis activity. Functionally, component of the proteasome core, a large protease complex with broad specificity involved in protein degradation. The polypeptide is Proteasome subunit beta 1 (Pyrobaculum neutrophilum (strain DSM 2338 / JCM 9278 / NBRC 100436 / V24Sta) (Thermoproteus neutrophilus)).